Consider the following 352-residue polypeptide: Guanidino acid hydrolase, mitochondrial (352 aa).

The N-terminal 35 residues, Met1–Gln35, are a transit peptide targeting the mitochondrion. Residues Arg11 to Phe49 form a disordered region. Mn(2+) is bound by residues His162, Asp185, His187, and Asp189. N6-acetyllysine is present on Lys193. Lys217 is subject to N6-acetyllysine; alternate. N6-succinyllysine; alternate is present on Lys217. 2 residues coordinate Mn(2+): Asp276 and Asp278.

The protein belongs to the ureohydrolase superfamily. Arginase family. The cofactor is Mn(2+). As to expression, highly expressed in liver and kidney. Also found in skeletal muscle, fetal liver, brain, testis, skin and the gastrointestinal tract. Within brain, expression is higher in the cerebral cortex with lower levels in the medulla and spinal cord.

Its subcellular location is the mitochondrion. The enzyme catalyses 3-guanidinopropanoate + H2O = urea + beta-alanine. It catalyses the reaction 4-guanidinobutanoate + H2O = urea + 4-aminobutanoate. It carries out the reaction taurocyamine + H2O = urea + taurine. The catalysed reaction is L-arginine + H2O = urea + L-ornithine. It functions in the pathway nitrogen metabolism; urea cycle; L-ornithine and urea from L-arginine: step 1/1. Hydrolyzes linear guanidino acids to form urea and the corresponding amines. Displays specificity for substrates having a negatively charged head group and short chains including taurocyamine, guanidino propanoic and butanoic acids. May protect cells by detoxifying potentially harmful amounts of guanidino acids. Metabolizes L-arginine with low efficiency. This Homo sapiens (Human) protein is Guanidino acid hydrolase, mitochondrial (AGMAT).